A 261-amino-acid chain; its full sequence is Triosephosphate isomerase (261 aa).

10 to 12 (NWK) lines the substrate pocket. His100 serves as the catalytic Electrophile. Glu172 serves as the catalytic Proton acceptor. Residues Gly178, Ser218, and 239–240 (GG) contribute to the substrate site.

It belongs to the triosephosphate isomerase family. In terms of assembly, homodimer.

It is found in the cytoplasm. The enzyme catalyses D-glyceraldehyde 3-phosphate = dihydroxyacetone phosphate. Its pathway is carbohydrate biosynthesis; gluconeogenesis. The protein operates within carbohydrate degradation; glycolysis; D-glyceraldehyde 3-phosphate from glycerone phosphate: step 1/1. Its function is as follows. Involved in the gluconeogenesis. Catalyzes stereospecifically the conversion of dihydroxyacetone phosphate (DHAP) to D-glyceraldehyde-3-phosphate (G3P). The sequence is that of Triosephosphate isomerase from Mycobacterium bovis (strain BCG / Pasteur 1173P2).